The sequence spans 473 residues: Photosystem II CP43 reaction center protein (473 aa).

Residues 1 to 14 (MKTLYSLRRFYHVE) constitute a propeptide that is removed on maturation. At T15 the chain carries N-acetylthreonine. Phosphothreonine is present on T15. A run of 5 helical transmembrane segments spans residues 69 to 93 (LFEV…PHLA), 134 to 155 (LLGP…KDRN), 178 to 200 (KASY…RKIT), 255 to 275 (KPFA…LSYS), and 291 to 312 (WFNN…ASQA). Residue E367 participates in [CaMn4O5] cluster binding. Residues 447–471 (RARAAAAGFEKGIDRDFEPVLSMTP) traverse the membrane as a helical segment.

It belongs to the PsbB/PsbC family. PsbC subfamily. In terms of assembly, PSII is composed of 1 copy each of membrane proteins PsbA, PsbB, PsbC, PsbD, PsbE, PsbF, PsbH, PsbI, PsbJ, PsbK, PsbL, PsbM, PsbT, PsbX, PsbY, PsbZ, Psb30/Ycf12, at least 3 peripheral proteins of the oxygen-evolving complex and a large number of cofactors. It forms dimeric complexes. Requires Binds multiple chlorophylls and provides some of the ligands for the Ca-4Mn-5O cluster of the oxygen-evolving complex. It may also provide a ligand for a Cl- that is required for oxygen evolution. PSII binds additional chlorophylls, carotenoids and specific lipids. as cofactor.

The protein localises to the plastid. It is found in the chloroplast thylakoid membrane. In terms of biological role, one of the components of the core complex of photosystem II (PSII). It binds chlorophyll and helps catalyze the primary light-induced photochemical processes of PSII. PSII is a light-driven water:plastoquinone oxidoreductase, using light energy to abstract electrons from H(2)O, generating O(2) and a proton gradient subsequently used for ATP formation. In Cicer arietinum (Chickpea), this protein is Photosystem II CP43 reaction center protein.